Here is a 370-residue protein sequence, read N- to C-terminus: Anthranilate phosphoribosyltransferase (370 aa).

Positions 1 to 27 (MALSAEGSSGGSRGGSPKAEAASVPSW) are disordered. 5-phospho-alpha-D-ribose 1-diphosphate-binding positions include Gly-107, 110-111 (GD), Thr-115, 117-120 (NLST), 135-143 (KHGNRAASS), and Gly-147. Residue Gly-107 participates in anthranilate binding. Position 119 (Ser-119) interacts with Mg(2+). An anthranilate-binding site is contributed by Asn-138. Arg-193 serves as a coordination point for anthranilate. Mg(2+) is bound by residues Asp-251 and Glu-252.

This sequence belongs to the anthranilate phosphoribosyltransferase family. Homodimer. Mg(2+) serves as cofactor.

The catalysed reaction is N-(5-phospho-beta-D-ribosyl)anthranilate + diphosphate = 5-phospho-alpha-D-ribose 1-diphosphate + anthranilate. It participates in amino-acid biosynthesis; L-tryptophan biosynthesis; L-tryptophan from chorismate: step 2/5. Catalyzes the transfer of the phosphoribosyl group of 5-phosphorylribose-1-pyrophosphate (PRPP) to anthranilate to yield N-(5'-phosphoribosyl)-anthranilate (PRA). The protein is Anthranilate phosphoribosyltransferase of Mycobacterium bovis (strain ATCC BAA-935 / AF2122/97).